A 557-amino-acid chain; its full sequence is MSYNRRSKNITQGVARSPNRSMYYALGYQKEDFDKPMIGIANGHSTITPCNAGLQRLSDAAVAAVKDAGANPQIFGTPTISDGMSMGTEGMKYSLVSREVIADCIETCVQGQWMDGVVVVGGCDKNMPGGMIALARINVPGIYVYGGTIRPGHWKGHDLTIVSSFEAVGEFTAGRMSQEDFEGVEKNACPTTGSCGGMYTANTMSSSFEALGMSLLYSSTMANPDQEKVDSAAESARVLVEAVKKDLKPRDIITKQSIENAVSVIMATGGSTNAVLHYLAIAHAAEIDWSIEDFERIRKRVPVICDLKPSGQYVATDLHAAGGIPQVMKLLLDAGLLHGDCMTITGRTLAEELKDVPSVPRADQKVIHPIDQALYKEGHLAILKGNLAEDGAVAKITGLKNPVITGPARVFDDEQSALAAILDDRIRAGDVVVLRYLGPQGGPGMPEMLAPTSAIIGKGLGESVGLITDGRFSGGTWGMVVGHVAPEAFVGGTIALVQEGDSITIDAHKLLLQLNVDDAELARRRVAWKQPAPRYTRGVLAKYAALARPANQGAVTG.

[2Fe-2S] cluster is bound at residue C50. Mg(2+) is bound at residue D82. Residue C123 coordinates [2Fe-2S] cluster. Residues D124 and K125 each contribute to the Mg(2+) site. K125 is modified (N6-carboxylysine). Residue C195 participates in [2Fe-2S] cluster binding. A Mg(2+)-binding site is contributed by E447. Catalysis depends on S473, which acts as the Proton acceptor.

Belongs to the IlvD/Edd family. Homodimer. [2Fe-2S] cluster is required as a cofactor. The cofactor is Mg(2+).

The catalysed reaction is (2R)-2,3-dihydroxy-3-methylbutanoate = 3-methyl-2-oxobutanoate + H2O. The enzyme catalyses (2R,3R)-2,3-dihydroxy-3-methylpentanoate = (S)-3-methyl-2-oxopentanoate + H2O. Its pathway is amino-acid biosynthesis; L-isoleucine biosynthesis; L-isoleucine from 2-oxobutanoate: step 3/4. The protein operates within amino-acid biosynthesis; L-valine biosynthesis; L-valine from pyruvate: step 3/4. In terms of biological role, functions in the biosynthesis of branched-chain amino acids. Catalyzes the dehydration of (2R,3R)-2,3-dihydroxy-3-methylpentanoate (2,3-dihydroxy-3-methylvalerate) into 2-oxo-3-methylpentanoate (2-oxo-3-methylvalerate) and of (2R)-2,3-dihydroxy-3-methylbutanoate (2,3-dihydroxyisovalerate) into 2-oxo-3-methylbutanoate (2-oxoisovalerate), the penultimate precursor to L-isoleucine and L-valine, respectively. The protein is Dihydroxy-acid dehydratase of Burkholderia pseudomallei (strain 1710b).